The sequence spans 321 residues: NADPH-dependent codeinone reductase 1-2 (321 aa).

Residues threonine 27 and aspartate 51 each coordinate NADPH. Active-site proton donor residues include tyrosine 56 and histidine 119. Histidine 119 provides a ligand contact to substrate. Positions 165, 187, 214, 216, 264, and 269 each coordinate NADPH. Residues 299–321 (SADFLLSPTGPFKTEEEFWDEKD) form a disordered region.

The protein belongs to the aldo/keto reductase family. In terms of tissue distribution, latex secreting cells (laticifer cells). Expressed constitutively in all organs with highest levels in capsules. Restricted to the parietal region of sieve elements adjacent or proximal to laticifers in roots, stems, leaves and carpels.

The protein localises to the cytoplasm. It is found in the cytosol. The catalysed reaction is codeine + NADP(+) = codeinone + NADPH + H(+). It catalyses the reaction neopine + NADP(+) = neopinone + NADPH + H(+). The enzyme catalyses morphine + NADP(+) = morphinone + NADPH + H(+). It carries out the reaction neomorphine + NADP(+) = neomorphinone + NADPH + H(+). Its pathway is alkaloid biosynthesis; morphine biosynthesis. Functionally, NADPH-dependent codeinone reductase involved in biosynthesis of morphinan-type benzylisoquinoline and opiate alkaloids natural products. Reduces codeinone to codeine in the penultimate step in morphine biosynthesis. Can use morphinone, hydrocodone and hydromorphone as substrate during reductive reaction with NADPH as cofactor, and morphine and dihydrocodeine as substrate during oxidative reaction with NADP as cofactor. Converts morphinone to morphine, and neomorphinone to neomorphine. Reduces irreversibly neopinone, a spontaneous isomer of codeinone, to neopine; in planta, neopine levels are limited to low levels. The sequence is that of NADPH-dependent codeinone reductase 1-2 from Papaver somniferum (Opium poppy).